The chain runs to 525 residues: Histidine-rich glycoprotein (525 aa).

A signal peptide spans 1-18 (MKALIAALLLITLQYSCA). Cystatin domains lie at 19-136 (VSPT…SALA) and 137-254 (NTKD…NING). Cystine bridges form between Cys-24–Cys-504, Cys-78–Cys-89, Cys-105–Cys-126, Cys-203–Cys-417, and Cys-218–Cys-241. The segment at 41–84 (RRRDGYLFQLLRIADAHLDRVENTTVYYLVLDVQESDCSVLSRK) is interaction with ATP5F1A. Asn-63 carries an N-linked (GlcNAc...) asparagine glycan. An N-linked (GlcNAc...) asparagine glycan is attached at Asn-125. Residues 252–407 (INGVPPHLGH…GHHPHGHHPH (156 aa)) form a disordered region. The segment covering 284–293 (RDHHHPHKPH) has biased composition (basic residues). Pro residues predominate over residues 310 to 320 (PPLPQGPPPLL). Residues 323 to 348 (SCSSCQHATFGTNGAQRHSHNNNSSD) show a composition bias toward polar residues. N-linked (GlcNAc...) asparagine glycans are attached at residues Asn-344 and Asn-345. The tract at residues 348 to 382 (DLHPHKHHSHEQHPHGHHPHAHHPHEHDTHRQHPH) is necessary for endothelial cell focal adhesions and anti-angiogenic activities. Basic residues-rich tracts occupy residues 351–371 (PHKHHSHEQHPHGHHPHAHHP) and 379–407 (QHPHGHHPHGHHPHGHHPHGHHPHGHHPH).

In terms of assembly, interacts (via the HRR domain) with TPM1; the interaction appears to contribute to the antiangiogenic properties of the HRR domain. Interacts with THBS2; the interaction blocks the antiangiogenic effect of THBS2 with CD36. Interacts with THBS1 (via the TSP type I repeats); the interaction blocks the antiangiogenic effect of THBS1 with CD3. Interacts with PLG (via its Kringle domains); the interaction tethers PLG to the cell surface and enhances its activation. Interacts with HPSE; the interaction is enhanced at acidic pH, partially inhibits binding of HPSE to cell surface receptors and modulates its enzymatic activity. Interacts (via the HRR domain) with TMP1; the interaction partially mediates the antiangiogenic properties of HRG. Interacts with kappa and lambda light chains of IgG molecules. Interacts with ATP5F1A; the interaction occurs on the surface of T-cells and alters their cell morphology in concert with CONA. Binds IgG molecules containing kappa and lambda light chains and inhibits the formation of insoluble immunoglobulin complexes. Interacts with F12; the interaction, which is enhanced in the presence of zinc ions and inhibited by heparin-binding to HRG, inhibits factor XII autoactivation and contact-initiated coagulation. Zn(2+) serves as cofactor. Proteolytic cleavage produces several HRG fragments which are mostly disulfide-linked and, therefore, not released. Cleavage by plasmin is inhibited in the presence of heparin, zinc ions or in an acidic environment. Cleavage reduces binding of HRG to heparan sulfate, but enhances the ability of HRG to bind and tether plasminogen to the cell surface. On platelet activation, releases a 33 kDa antiangiogenic peptide which encompasses the HRR. Also cleaved in the C-terminal by plasmin. Post-translationally, N-glycosylated. As to expression, expressed in macrophages and in malignant cells. Expressed by the liver and secreted in plasma (at protein level).

It is found in the secreted. Its function is as follows. Plasma glycoprotein that binds a number of ligands such as heme, heparin, heparan sulfate, thrombospondin, plasminogen, and divalent metal ions. Binds heparin and heparin/glycosaminoglycans in a zinc-dependent manner. Binds heparan sulfate on the surface of liver, lung, kidney and heart endothelial cells. Binds to N-sulfated polysaccharide chains on the surface of liver endothelial cells. Inhibits rosette formation. Acts as an adapter protein and is implicated in regulating many processes such as immune complex and pathogen clearance, cell chemotaxis, cell adhesion, angiogenesis, coagulation and fibrinolysis. Mediates clearance of necrotic cells through enhancing the phagocytosis of necrotic cells in a heparan sulfate-dependent pathway. This process can be regulated by the presence of certain HRG ligands such as heparin and zinc ions. Binds to IgG subclasses of immunoglobins containing kappa and lambda light chains with different affinities regulating their clearance and inhibiting the formation of insoluble immune complexes. Tethers plasminogen to the cell surface. Binds T-cells and alters the cell morphology. Modulates angiogenesis by blocking the CD6-mediated antiangiongenic effect of thrombospondins, THBS1 and THBS2. Acts as a regulator of the vascular endothelial growth factor (VEGF) signaling pathway; inhibits endothelial cell motility by reducing VEGF-induced complex formation between PXN/paxillin and ILK/integrin-linked protein kinase and by promoting inhibition of VEGF-induced tyrosine phosphorylation of focal adhesion kinases and alpha-actinins in endothelial cells. Also plays a role in the regulation of tumor angiogenesis and tumor immune surveillance. Normalizes tumor vessels and promotes antitumor immunity by polarizing tumor-associated macrophages, leading to decreased tumor growth and metastasis. This is Histidine-rich glycoprotein (HRG) from Homo sapiens (Human).